The primary structure comprises 733 residues: Phosphoribosylformylglycinamidine synthase subunit PurL (733 aa).

His-41 is an active-site residue. Residues Tyr-44 and Lys-83 each contribute to the ATP site. Mg(2+) is bound at residue Glu-85. Residues 86-89 (SHNH) and Arg-108 contribute to the substrate site. The active-site Proton acceptor is the His-87. Asp-109 is a binding site for Mg(2+). Residues 212 to 232 (GASFASQELSEESEEKRPSVQ) form a disordered region. Gln-232 is a substrate binding site. Asp-260 serves as a coordination point for Mg(2+). Substrate is bound at residue 304-306 (ESQ). Positions 488 and 525 each coordinate ATP. Asn-526 serves as a coordination point for Mg(2+). Residue Ser-528 participates in substrate binding.

Belongs to the FGAMS family. Monomer. Part of the FGAM synthase complex composed of 1 PurL, 1 PurQ and 2 PurS subunits.

Its subcellular location is the cytoplasm. The enzyme catalyses N(2)-formyl-N(1)-(5-phospho-beta-D-ribosyl)glycinamide + L-glutamine + ATP + H2O = 2-formamido-N(1)-(5-O-phospho-beta-D-ribosyl)acetamidine + L-glutamate + ADP + phosphate + H(+). Its pathway is purine metabolism; IMP biosynthesis via de novo pathway; 5-amino-1-(5-phospho-D-ribosyl)imidazole from N(2)-formyl-N(1)-(5-phospho-D-ribosyl)glycinamide: step 1/2. Part of the phosphoribosylformylglycinamidine synthase complex involved in the purines biosynthetic pathway. Catalyzes the ATP-dependent conversion of formylglycinamide ribonucleotide (FGAR) and glutamine to yield formylglycinamidine ribonucleotide (FGAM) and glutamate. The FGAM synthase complex is composed of three subunits. PurQ produces an ammonia molecule by converting glutamine to glutamate. PurL transfers the ammonia molecule to FGAR to form FGAM in an ATP-dependent manner. PurS interacts with PurQ and PurL and is thought to assist in the transfer of the ammonia molecule from PurQ to PurL. This is Phosphoribosylformylglycinamidine synthase subunit PurL from Thermoanaerobacter pseudethanolicus (strain ATCC 33223 / 39E) (Clostridium thermohydrosulfuricum).